Here is a 544-residue protein sequence, read N- to C-terminus: Chaperonin GroEL (544 aa).

Residues 30–33, Lys51, 87–91, Gly415, 479–481, and Asp495 contribute to the ATP site; these read TLGP, DGTTT, and NAA.

The protein belongs to the chaperonin (HSP60) family. In terms of assembly, forms a cylinder of 14 subunits composed of two heptameric rings stacked back-to-back. Interacts with the co-chaperonin GroES.

The protein localises to the cytoplasm. It carries out the reaction ATP + H2O + a folded polypeptide = ADP + phosphate + an unfolded polypeptide.. Its function is as follows. Together with its co-chaperonin GroES, plays an essential role in assisting protein folding. The GroEL-GroES system forms a nano-cage that allows encapsulation of the non-native substrate proteins and provides a physical environment optimized to promote and accelerate protein folding. The polypeptide is Chaperonin GroEL (Francisella tularensis subsp. tularensis (strain WY96-3418)).